The primary structure comprises 120 residues: MISKIDKNKVRLKRHARVRNKLAGTAEKPRLNIYRSNKHIYAQVIDDVSGKTLAQASTQEKDLANESGSKVELSAKVGETVAKRASEKGVKTIVFDRGGYLYHGRVKALADAARENGLEF.

The protein belongs to the universal ribosomal protein uL18 family. In terms of assembly, part of the 50S ribosomal subunit; part of the 5S rRNA/L5/L18/L25 subcomplex. Contacts the 5S and 23S rRNAs.

Its function is as follows. This is one of the proteins that bind and probably mediate the attachment of the 5S RNA into the large ribosomal subunit, where it forms part of the central protuberance. The polypeptide is Large ribosomal subunit protein uL18 (Staphylococcus saprophyticus subsp. saprophyticus (strain ATCC 15305 / DSM 20229 / NCIMB 8711 / NCTC 7292 / S-41)).